Here is a 364-residue protein sequence, read N- to C-terminus: tRNA-specific 2-thiouridylase MnmA (364 aa).

ATP-binding positions include 6–13 and leucine 32; that span reads AMSGGVDS. The active-site Nucleophile is cysteine 101. A disulfide bond links cysteine 101 and cysteine 193. Glycine 125 provides a ligand contact to ATP. Residues 143-145 form an interaction with tRNA region; that stretch reads KDQ. The active-site Cysteine persulfide intermediate is the cysteine 193.

The protein belongs to the MnmA/TRMU family.

Its subcellular location is the cytoplasm. The enzyme catalyses S-sulfanyl-L-cysteinyl-[protein] + uridine(34) in tRNA + AH2 + ATP = 2-thiouridine(34) in tRNA + L-cysteinyl-[protein] + A + AMP + diphosphate + H(+). Its function is as follows. Catalyzes the 2-thiolation of uridine at the wobble position (U34) of tRNA, leading to the formation of s(2)U34. The sequence is that of tRNA-specific 2-thiouridylase MnmA from Rhodococcus opacus (strain B4).